The sequence spans 1085 residues: Solute carrier family 12 member 4 (1085 aa).

The Cytoplasmic segment spans residues 1-119 (MPHFTVVPVD…RRAAKAPSMG (119 aa)). Residues serine 24, serine 47, serine 81, and serine 88 each carry the phosphoserine modification. The discontinuously helical transmembrane segment at 120–141 (TLMGVYLPCLQNIFGVILFLRL) threads the bilayer. Asparagine 131 and isoleucine 132 together coordinate K(+). At 142–149 (TWMVGTAG) the chain is on the extracellular side. Residues 150-172 (VLQALLIVLICCCCTLLTAISMS) form a helical membrane-spanning segment. Over 173–196 (AIATNGVVPAGGSYFMISRSLGPE) the chain is Cytoplasmic. Residues 197–225 (FGGAVGLCFYLGTTFAAAMYILGAIEILL) traverse the membrane as a helical segment. Tyrosine 216 is a binding site for K(+). Topologically, residues 226-248 (TYIAPPAAIFYPSGTHDMSSATL) are extracellular. 2 helical membrane-spanning segments follow: residues 249–271 (NNMR…VGVK) and 272–297 (YVNK…GGIK). Residues 298–419 (SIFDPPVFPV…LYVVADIATS (122 aa)) are Extracellular-facing. Cysteine 308 and cysteine 323 form a disulfide bridge. 3 N-linked (GlcNAc...) asparagine glycosylation sites follow: asparagine 312, asparagine 331, and asparagine 347. A disulfide bridge links cysteine 343 with cysteine 353. Residues 420 to 440 (FTVLVGIFFPSVTGIMAGSNR) form a helical membrane-spanning segment. Residues proline 429 and threonine 432 each contribute to the K(+) site. Residues glycine 433, isoleucine 434, and methionine 435 each coordinate chloride. Over 441 to 450 (SGDLRDAQKS) the chain is Cytoplasmic. Residues 451-473 (IPVGTILAIVTTSLVYFSSVILF) form a helical membrane-spanning segment. The Extracellular portion of the chain corresponds to 474–504 (GACIEGVVLRDKYGDGVSRNLVVGTLAWPSP). Residues 505-531 (WVIVVGSFFSTCGAGLQSLTGAPRLLQ) form a helical membrane-spanning segment. Over 532–554 (AIAKDNIIPFLRVFGHGKANGEP) the chain is Cytoplasmic. 2 consecutive transmembrane segments (helical) span residues 555–575 (TWAL…ASLD) and 576–598 (MVAP…ACAV). Position 589 (tyrosine 589) interacts with chloride. The Cytoplasmic segment spans residues 599 to 612 (QTLLRTPNWRPRFK). A run of 2 helical transmembrane segments spans residues 613 to 635 (YYHW…VSSW) and 636 to 651 (YYAL…IYKY). Residues 652-1085 (IEYQGAEKEW…GGREVITIYS (434 aa)) are Cytoplasmic-facing. The segment at 665-681 (IRGLSLSAARYALLRLE) is scissor helix. Residues leucine 697, lysine 699, lysine 707, tyrosine 708, and valine 730 each contribute to the ATP site. Serine 734 carries the phosphoserine modification. ATP is bound by residues glycine 794, tryptophan 795, and tyrosine 797. Phosphoserine occurs at positions 916 and 967. The residue at position 983 (threonine 983) is a Phosphothreonine. At serine 1050 the chain carries Phosphoserine.

The protein belongs to the SLC12A transporter family. K/Cl co-transporter subfamily. Homodimer; adopts a domain-swap conformation at the scissor helices connecting the transmembrane domain and C-terminal domain. Heterodimer with other K-Cl cotransporters. Post-translationally, phosphorylated, phosphorylation may regulate transporter activity. Detected in embryo, adult heart, erythrocytes, brain, kidney, stomach, ovary, testis and liver.

It localises to the cell membrane. The catalysed reaction is K(+)(in) + chloride(in) = K(+)(out) + chloride(out). With respect to regulation, inhibited by WNK3. In terms of biological role, mediates electroneutral potassium-chloride cotransport when activated by cell swelling. May contribute to cell volume homeostasis in single cells. May be involved in the regulation of basolateral Cl(-) exit in NaCl absorbing epithelia. The sequence is that of Solute carrier family 12 member 4 (Slc12a4) from Mus musculus (Mouse).